Here is a 387-residue protein sequence, read N- to C-terminus: TSC22 domain family protein 4 (387 aa).

2 disordered regions span residues 1–85 and 135–232; these read MSGG…GEPY and ISTP…RRDG. Positions 31-51 are enriched in pro residues; it reads PVPPALAGPPPRLPNGDPNPD. Residue T57 is modified to Phosphothreonine. Phosphoserine occurs at positions 62 and 165. A Phosphothreonine modification is found at T183. Residues S187, S189, and S219 each carry the phosphoserine modification. Residue T223 is modified to Phosphothreonine. S254, S258, and S271 each carry phosphoserine. The interval 336 to 357 is leucine-zipper; it reads LKEQIRDLAERNAALEQENGLL. Residue S362 is modified to Phosphoserine. Residues 368–387 form a disordered region; it reads QLPSSGLPRLGPSAPNGPSI.

Belongs to the TSC-22/Dip/Bun family. As to quaternary structure, forms a homodimer or heterodimer. Forms a heterodimer with TSC22D1 isoforms 1 and 2. Interacts with NRBP1. Expressed in the liver (at protein level). Expressed in Purkinje cells and proliferating cerebellar granular neurons (at protein level). Expressed in the cortex, medulla and papilla of the kidney.

Its subcellular location is the nucleus. It is found in the cytoplasm. It localises to the cell projection. The protein localises to the dendrite. The protein resides in the synapse. In terms of biological role, binds DNA and acts as a transcriptional repressor. Involved in the regulation of systematic glucose homeostasis and insulin sensitivity, via transcriptional repression of downstream insulin signaling targets such as OBP2A/LCN13. Acts as a negative regulator of lipogenic gene expression in hepatocytes and thereby mediates the control of very low-density lipoprotein release. May play a role in neurite elongation and survival. The chain is TSC22 domain family protein 4 from Mus musculus (Mouse).